The sequence spans 376 residues: N-acetyldiaminopimelate deacetylase (376 aa).

The active site involves Asp69. The Proton acceptor role is filled by Glu128.

It belongs to the peptidase M20A family. N-acetyldiaminopimelate deacetylase subfamily.

It catalyses the reaction N-acetyl-(2S,6S)-2,6-diaminopimelate + H2O = (2S,6S)-2,6-diaminopimelate + acetate. It functions in the pathway amino-acid biosynthesis; L-lysine biosynthesis via DAP pathway; LL-2,6-diaminopimelate from (S)-tetrahydrodipicolinate (acetylase route): step 3/3. In terms of biological role, catalyzes the conversion of N-acetyl-diaminopimelate to diaminopimelate and acetate. The sequence is that of N-acetyldiaminopimelate deacetylase from Bacillus thuringiensis subsp. konkukian (strain 97-27).